We begin with the raw amino-acid sequence, 175 residues long: Ribosome-binding factor A (175 aa).

Residues 129-175 (GAKPAGEADPYRDRGSADEPSDAGGLVIRTSDGLEAENTGDDYQAED) form a disordered region. A compositionally biased stretch (acidic residues) spans 162–175 (LEAENTGDDYQAED).

This sequence belongs to the RbfA family. In terms of assembly, monomer. Binds 30S ribosomal subunits, but not 50S ribosomal subunits or 70S ribosomes.

It is found in the cytoplasm. One of several proteins that assist in the late maturation steps of the functional core of the 30S ribosomal subunit. Associates with free 30S ribosomal subunits (but not with 30S subunits that are part of 70S ribosomes or polysomes). Required for efficient processing of 16S rRNA. May interact with the 5'-terminal helix region of 16S rRNA. This Mycobacterium marinum (strain ATCC BAA-535 / M) protein is Ribosome-binding factor A.